We begin with the raw amino-acid sequence, 397 residues long: Lymphoid enhancer-binding factor 1 (397 aa).

The CTNNB1-binding stretch occupies residues Met-1–Glu-60. Residue Lys-25 forms a Glycyl lysine isopeptide (Lys-Gly) (interchain with G-Cter in SUMO) linkage. A disordered region spans residues Glu-38–Lys-102. The segment covering Pro-80–Asp-96 has biased composition (basic and acidic residues). Position 130 is a phosphoserine (Ser-130). Phosphothreonine; by NLK is present on Thr-153. Ser-164 bears the Phosphoserine; by NLK mark. 2 disordered regions span residues Ser-164 to Glu-190 and Val-266 to His-296. Lys-267 participates in a covalent cross-link: Glycyl lysine isopeptide (Lys-Gly) (interchain with G-Cter in SUMO). A compositionally biased stretch (basic and acidic residues) spans Lys-267 to Arg-294. A DNA-binding region (HMG box) is located at residues Ile-297–Ser-365. A disordered region spans residues Arg-367–Ile-397.

Belongs to the TCF/LEF family. As to quaternary structure, binds the armadillo repeat of CTNNB1 and forms a stable complex. Interacts with TLE1, PIASG, ALYREF/THOC4, EP300, MDFI and MDFIC. Interacts with DAZAP2. Phosphorylated at Thr-153 and/or Ser-164 by NLK. Phosphorylation by NLK at these sites represses LEF1-mediated transcriptional activation of target genes of the canonical Wnt signaling pathway.

The protein resides in the nucleus. Functionally, transcription factor that binds DNA in a sequence-specific manner. Participates in the Wnt signaling pathway. Activates transcription of target genes in the presence of CTNNB1 and EP300. PIASG antagonizes both Wnt-dependent and Wnt-independent activation by LEF1. TLE1, TLE2, TLE3 and TLE4 repress transactivation mediated by LEF1 and CTNNB1. Regulates T-cell receptor alpha enhancer function. Required for IL17A expressing gamma-delta T-cell maturation and development, via binding to regulator loci of BLK to modulate expression. Acts as a positive regulator of odontoblast differentiation during mesenchymal tooth germ formation, expression is repressed during the bell stage by MSX1-mediated inhibition of CTNNB1 signaling. May play a role in hair cell differentiation and follicle morphogenesis. This Rattus norvegicus (Rat) protein is Lymphoid enhancer-binding factor 1.